Consider the following 549-residue polypeptide: Cytoplasmic trehalase (549 aa).

Substrate contacts are provided by residues R168, 175 to 176, N212, 221 to 223, 292 to 294, and G324; these read WD, RSQ, and RDE. Active-site proton donor/acceptor residues include D326 and E509. Residue E525 coordinates substrate.

The protein belongs to the glycosyl hydrolase 37 family. In terms of assembly, monomer.

It localises to the cytoplasm. The enzyme catalyses alpha,alpha-trehalose + H2O = alpha-D-glucose + beta-D-glucose. It functions in the pathway glycan degradation; trehalose degradation; D-glucose from alpha,alpha-trehalose: step 1/1. Its function is as follows. Hydrolyzes trehalose to glucose. Could be involved, in cells returning to low osmolarity conditions, in the utilization of the accumulated cytoplasmic trehalose, which was synthesized in response to high osmolarity. This Salmonella schwarzengrund (strain CVM19633) protein is Cytoplasmic trehalase.